Here is a 441-residue protein sequence, read N- to C-terminus: UDP-N-acetylglucosamine 1-carboxyvinyltransferase 1 (441 aa).

42–43 (KN) contributes to the phosphoenolpyruvate binding site. R117 lines the UDP-N-acetyl-alpha-D-glucosamine pocket. The Proton donor role is filled by C141. A 2-(S-cysteinyl)pyruvic acid O-phosphothioketal modification is found at C141. UDP-N-acetyl-alpha-D-glucosamine-binding residues include D330 and I352.

It belongs to the EPSP synthase family. MurA subfamily.

Its subcellular location is the cytoplasm. The enzyme catalyses phosphoenolpyruvate + UDP-N-acetyl-alpha-D-glucosamine = UDP-N-acetyl-3-O-(1-carboxyvinyl)-alpha-D-glucosamine + phosphate. It participates in cell wall biogenesis; peptidoglycan biosynthesis. Its function is as follows. Cell wall formation. Adds enolpyruvyl to UDP-N-acetylglucosamine. The sequence is that of UDP-N-acetylglucosamine 1-carboxyvinyltransferase 1 from Symbiobacterium thermophilum (strain DSM 24528 / JCM 14929 / IAM 14863 / T).